Here is a 151-residue protein sequence, read N- to C-terminus: MTTETHTLKIEEIIELLPHRYPFLLVDRVLEFEESKYLRAVKNVSVNEPFFQGHFPGKPIFPGVLILEAMAQATGILAFKSVGKLEPGELYYFAGIDEARFKRPVVPGDQMIMEVTFEKTRRGLTRFKGVATVDGKIVCEATMMCARSREA.

Residue His54 is part of the active site.

This sequence belongs to the thioester dehydratase family. FabZ subfamily.

Its subcellular location is the cytoplasm. The enzyme catalyses a (3R)-hydroxyacyl-[ACP] = a (2E)-enoyl-[ACP] + H2O. Involved in unsaturated fatty acids biosynthesis. Catalyzes the dehydration of short chain beta-hydroxyacyl-ACPs and long chain saturated and unsaturated beta-hydroxyacyl-ACPs. This chain is 3-hydroxyacyl-[acyl-carrier-protein] dehydratase FabZ, found in Erwinia tasmaniensis (strain DSM 17950 / CFBP 7177 / CIP 109463 / NCPPB 4357 / Et1/99).